Here is a 254-residue protein sequence, read N- to C-terminus: NAD-dependent protein deacetylase 1 (254 aa).

Residues 3–252 (VDFTTDELDE…PKLLDRLRGM (250 aa)) form the Deacetylase sirtuin-type domain. Positions 29, 33, 40, 41, 105, 107, 108, and 123 each coordinate NAD(+). Residue phenylalanine 40 participates in nicotinamide binding. Nicotinamide is bound by residues valine 107 and aspartate 108. Histidine 123 (proton acceptor) is an active-site residue. Zn(2+) contacts are provided by cysteine 131, cysteine 134, cysteine 154, and cysteine 157. Residues threonine 195, serine 196, and asparagine 220 each coordinate NAD(+).

Belongs to the sirtuin family. Class U subfamily. The cofactor is Zn(2+).

It is found in the cytoplasm. The enzyme catalyses N(6)-acetyl-L-lysyl-[protein] + NAD(+) + H2O = 2''-O-acetyl-ADP-D-ribose + nicotinamide + L-lysyl-[protein]. Functionally, NAD-dependent protein deacetylase which modulates the activities of several enzymes which are inactive in their acetylated form. Deacetylates the N-terminal lysine residue of Alba, the major archaeal chromatin protein and that, in turn, increases Alba's DNA binding affinity, thereby repressing transcription. This Pyrobaculum aerophilum (strain ATCC 51768 / DSM 7523 / JCM 9630 / CIP 104966 / NBRC 100827 / IM2) protein is NAD-dependent protein deacetylase 1.